A 320-amino-acid polypeptide reads, in one-letter code: MEKNIKFPVVDLSKLIGEERDQTMALINDACENWGFFEIVNHGLPHDLMDNAEKMTKEHYKISMEQKFNDMLKSKGLENLEREVEDVDWESTFYLRHLPQSNLYDIPDMSDEYRTAMKDFGKRLENLAEDLLDLLCENLGLEKGYLKKVFHGTKGPTFGTKVSNYPACPKPEMIKGLRAHTDAGGIILLFQDDKVTGLQLLKDGDWIDVPPLNHSIVINLGDQLEVITNGRYKSMMHRVVTQKEGNRMSIASFYNPGSDAEISPASSLACKETEYPSFVFDDYMKLYAGVKFQPKEPRFEAMKNANAVTELNPTAAVETF.

In terms of domain architecture, Fe2OG dioxygenase spans 156–256 (PTFGTKVSNY…RMSIASFYNP (101 aa)). Fe cation-binding residues include H180, D182, and H237.

The protein belongs to the iron/ascorbate-dependent oxidoreductase family. It depends on Fe cation as a cofactor.

It carries out the reaction 1-aminocyclopropane-1-carboxylate + L-ascorbate + O2 = ethene + L-dehydroascorbate + hydrogen cyanide + CO2 + 2 H2O. The protein operates within alkene biosynthesis; ethylene biosynthesis via S-adenosyl-L-methionine; ethylene from S-adenosyl-L-methionine: step 2/2. The protein is 1-aminocyclopropane-1-carboxylate oxidase (ACO) of Brassica juncea (Indian mustard).